A 1104-amino-acid polypeptide reads, in one-letter code: Receptor-type guanylate cyclase gcy-15 (1104 aa).

Residues 1–431 (MEIAINRLNA…ENCGPPANNT (431 aa)) lie on the Extracellular side of the membrane. 6 N-linked (GlcNAc...) asparagine glycosylation sites follow: N43, N237, N263, N287, N407, and N429. A helical transmembrane segment spans residues 432–452 (FIIVISVGVAVLIGLAIAAAF). Residues 453-1104 (LYKRYRYERR…QIQEKTYEFS (652 aa)) lie on the Cytoplasmic side of the membrane. In terms of domain architecture, Protein kinase spans 528–823 (FNTGSTARAG…QIKRKLKPLT (296 aa)). ATP-binding positions include 534–542 (ARAGPFGPI) and K576. Residues 838–871 (IEKYTDKLEKDIAERNEELEAEKAKSEALLKMML) adopt a coiled-coil conformation. Residues 894 to 1024 (TVFFSDCPGF…DTVNTASRME (131 aa)) enclose the Guanylate cyclase domain.

Belongs to the adenylyl cyclase class-4/guanylyl cyclase family. As to expression, expressed bilaterally in ASG sensory neurons.

Its subcellular location is the cell membrane. It catalyses the reaction GTP = 3',5'-cyclic GMP + diphosphate. Its function is as follows. Guanylate cyclase involved in the production of the second messenger cGMP. This Caenorhabditis elegans protein is Receptor-type guanylate cyclase gcy-15.